We begin with the raw amino-acid sequence, 209 residues long: Kynurenine formamidase (209 aa).

Substrate is bound at residue Trp-20. Residues His-50, His-54, and Asp-56 each contribute to the Zn(2+) site. Residue His-60 is the Proton donor/acceptor of the active site. Zn(2+) contacts are provided by His-161 and Glu-173.

Belongs to the Cyclase 1 superfamily. KynB family. As to quaternary structure, homodimer. Zn(2+) serves as cofactor.

It carries out the reaction N-formyl-L-kynurenine + H2O = L-kynurenine + formate + H(+). It participates in amino-acid degradation; L-tryptophan degradation via kynurenine pathway; L-kynurenine from L-tryptophan: step 2/2. Its function is as follows. Catalyzes the hydrolysis of N-formyl-L-kynurenine to L-kynurenine, the second step in the kynurenine pathway of tryptophan degradation. The sequence is that of Kynurenine formamidase from Bacillus anthracis.